The following is a 333-amino-acid chain: Pantothenate synthetase (333 aa).

27–34 serves as a coordination point for ATP; sequence MGALHEGH. H34 serves as the catalytic Proton donor. Q61 contributes to the (R)-pantoate binding site. Beta-alanine is bound at residue Q61. Residue 148–151 coordinates ATP; that stretch reads GQKD. Q154 serves as a coordination point for (R)-pantoate. ATP is bound by residues V177 and 185–188; that span reads LSSR.

The protein belongs to the pantothenate synthetase family. As to quaternary structure, homodimer.

It localises to the cytoplasm. The catalysed reaction is (R)-pantoate + beta-alanine + ATP = (R)-pantothenate + AMP + diphosphate + H(+). It participates in cofactor biosynthesis; (R)-pantothenate biosynthesis; (R)-pantothenate from (R)-pantoate and beta-alanine: step 1/1. Its function is as follows. Catalyzes the condensation of pantoate with beta-alanine in an ATP-dependent reaction via a pantoyl-adenylate intermediate. The chain is Pantothenate synthetase from Streptomyces avermitilis (strain ATCC 31267 / DSM 46492 / JCM 5070 / NBRC 14893 / NCIMB 12804 / NRRL 8165 / MA-4680).